The primary structure comprises 36 residues: Protein YnfP (36 aa).

The polypeptide is Protein YnfP (Escherichia coli (strain K12)).